Here is a 343-residue protein sequence, read N- to C-terminus: N-acetyl-gamma-glutamyl-phosphate reductase (343 aa).

Residue Cys147 is part of the active site.

Belongs to the NAGSA dehydrogenase family. Type 1 subfamily.

The protein localises to the cytoplasm. It catalyses the reaction N-acetyl-L-glutamate 5-semialdehyde + phosphate + NADP(+) = N-acetyl-L-glutamyl 5-phosphate + NADPH + H(+). The protein operates within amino-acid biosynthesis; L-arginine biosynthesis; N(2)-acetyl-L-ornithine from L-glutamate: step 3/4. In terms of biological role, catalyzes the NADPH-dependent reduction of N-acetyl-5-glutamyl phosphate to yield N-acetyl-L-glutamate 5-semialdehyde. The polypeptide is N-acetyl-gamma-glutamyl-phosphate reductase (Listeria monocytogenes serotype 4b (strain F2365)).